The chain runs to 77 residues: Large ribosomal subunit protein eL20 (77 aa).

This sequence belongs to the eukaryotic ribosomal protein eL20 family. As to quaternary structure, part of the 50S ribosomal subunit. Binds 23S rRNA.

This Pyrococcus furiosus (strain ATCC 43587 / DSM 3638 / JCM 8422 / Vc1) protein is Large ribosomal subunit protein eL20.